The primary structure comprises 396 residues: Methionine import ATP-binding protein MetN 2 (396 aa).

The ABC transporter domain maps to 41–280 (VSFELVGKVF…PRHGATRALL (240 aa)). Residue 77–84 (GRSGAGKS) participates in ATP binding.

Belongs to the ABC transporter superfamily. Methionine importer (TC 3.A.1.24) family. In terms of assembly, the complex is composed of two ATP-binding proteins (MetN), two transmembrane proteins (MetI) and a solute-binding protein (MetQ).

The protein localises to the cell inner membrane. The enzyme catalyses L-methionine(out) + ATP + H2O = L-methionine(in) + ADP + phosphate + H(+). The catalysed reaction is D-methionine(out) + ATP + H2O = D-methionine(in) + ADP + phosphate + H(+). Functionally, part of the ABC transporter complex MetNIQ involved in methionine import. Responsible for energy coupling to the transport system. The sequence is that of Methionine import ATP-binding protein MetN 2 from Burkholderia mallei (strain ATCC 23344).